The chain runs to 486 residues: UDP-N-acetylmuramate--L-alanine ligase (486 aa).

123–129 serves as a coordination point for ATP; it reads GTHGKTT.

The protein belongs to the MurCDEF family.

It localises to the cytoplasm. The enzyme catalyses UDP-N-acetyl-alpha-D-muramate + L-alanine + ATP = UDP-N-acetyl-alpha-D-muramoyl-L-alanine + ADP + phosphate + H(+). Its pathway is cell wall biogenesis; peptidoglycan biosynthesis. Functionally, cell wall formation. The sequence is that of UDP-N-acetylmuramate--L-alanine ligase from Pseudomonas syringae pv. syringae (strain B728a).